The following is a 64-amino-acid chain: Conotoxin Pn-B01122 (64 aa).

A signal peptide spans 1-22 (MRCLPVFVILLLLIASAPSVDA). Positions 23–48 (RPKTKDDIPLVSFQDNAKRALQILSN) are excised as a propeptide.

This sequence belongs to the conotoxin T superfamily. In terms of processing, contains 2 disulfide bonds that can be either 'C1-C3, C2-C4' or 'C1-C4, C2-C3', since these disulfide connectivities have been observed for conotoxins with cysteine framework V (for examples, see AC P0DQQ7 and AC P81755). In terms of tissue distribution, expressed by the venom duct.

The protein localises to the secreted. In Conus pennaceus (Feathered cone), this protein is Conotoxin Pn-B01122.